The following is a 166-amino-acid chain: MIRGRVWKFGDNISTDHIAPGRYFHLRNNLEELAKHVLEDAMEDFAKKVQKGDIIVAGKNFGLGSSREHAARIIKIAGVSCIVAKSFARIFYRNAINVGLPVIELKEVDEINQGDELEIDLENGVLKNLTTGKEYRFTPIPKFLLEILKEDGIVNYLKKHGSFPKV.

This sequence belongs to the LeuD family. LeuD type 2 subfamily. In terms of assembly, heterodimer of LeuC and LeuD.

It catalyses the reaction (2R,3S)-3-isopropylmalate = (2S)-2-isopropylmalate. Its pathway is amino-acid biosynthesis; L-leucine biosynthesis; L-leucine from 3-methyl-2-oxobutanoate: step 2/4. Catalyzes the isomerization between 2-isopropylmalate and 3-isopropylmalate, via the formation of 2-isopropylmaleate. The protein is 3-isopropylmalate dehydratase small subunit 1 (leuD1) of Thermotoga maritima (strain ATCC 43589 / DSM 3109 / JCM 10099 / NBRC 100826 / MSB8).